The primary structure comprises 340 residues: Acidic endochitinase WIN6 (340 aa).

The N-terminal stretch at 1–22 (MSVWALFAFFSLFLSLSVRGSA) is a signal peptide. The Chitin-binding type-1 domain maps to 23–63 (EQCGRQAGDALCPGGLCCSSYGWCGTTVDYCGIGCQSQCDG). Cystine bridges form between Cys-25–Cys-40, Cys-34–Cys-46, Cys-39–Cys-53, and Cys-57–Cys-61. The interval 64 to 85 (GGGGDGGDDGCDGGDDGGGDGD) is spacer. The tract at residues 86–340 (DGYLSDIIPK…YGLSGLKDTM (255 aa)) is chitinase. 3 cysteine pairs are disulfide-bonded: Cys-110–Cys-172, Cys-183–Cys-191, and Cys-290–Cys-323. Residue Glu-154 is the Proton donor of the active site.

The protein belongs to the glycosyl hydrolase 19 family. Chitinase class I subfamily.

It catalyses the reaction Random endo-hydrolysis of N-acetyl-beta-D-glucosaminide (1-&gt;4)-beta-linkages in chitin and chitodextrins.. Functionally, defense against chitin-containing fungal pathogens. This is Acidic endochitinase WIN6 (WIN6) from Populus trichocarpa (Western balsam poplar).